The following is a 317-amino-acid chain: Taste receptor type 2 member 14 (317 aa).

Topologically, residues 1-7 are extracellular; that stretch reads MGGVIKS. Residues 8 to 28 form a helical membrane-spanning segment; that stretch reads IFTFVLIVEFIIGNLGNSFIA. At 29-55 the chain is on the cytoplasmic side; it reads LVNCIDWVKGRKISSVDRILTALAISK. The helical transmembrane segment at 56-76 threads the bilayer; that stretch reads ISLVWLIFGSWCVSVFFPALF. Residues 77–87 are Extracellular-facing; sequence ATEKMFRMLTN. Residues Thr-86 and Trp-89 each contribute to the cholesterol site. A helical membrane pass occupies residues 88–108; sequence IWTVINHFSVWLATGLGTFYF. The Cytoplasmic segment spans residues 109-129; sequence LKIANFSNSIFLYLKWRVKKV. Residues 130 to 150 traverse the membrane as a helical segment; the sequence is VLVLLLVTSVFLFLNIALINI. The Extracellular portion of the chain corresponds to 151–184; the sequence is HINASINGYRRNKTCSSDSSNFTRFSSLIVLTST. Residues Asn-153, Asn-162, and Asn-171 are each glycosylated (N-linked (GlcNAc...) asparagine). Val-180 contributes to the cholesterol binding site. A helical membrane pass occupies residues 185-205; the sequence is VFIFIPFTLSLAMFLLLIFSX. Over 206–232 the chain is Cytoplasmic; that stretch reads WKHRKKMQHTVKRSGDASTKAHRGVKS. A helical membrane pass occupies residues 233 to 253; the sequence is VXTFFLLYAIFCLSFFISVWT. Residues 254 to 261 are Extracellular-facing; sequence SERLEENL. A helical transmembrane segment spans residues 262-282; sequence IILSQVMGMAYPSCHSCVLIL. Cholesterol-binding residues include Ser-265 and Met-268. The Cytoplasmic segment spans residues 283-317; that stretch reads GNKKLRQASLSVLLWLRYMFKDGEPSGHKEFRESS.

Belongs to the G-protein coupled receptor T2R family. As to quaternary structure, core component of the TAS2R14-GNAI1 complex, consisting of TAS2R14, GNAI1, GNB1 and GNG2; within the complex interacts with GNAI1. Core component of the TAS2R14-GNAT3 complex, consisting of TAS2R14, GNAT3, GNB1 and GNG2; within the complex interacts with GNAT3. Core component of the TAS2R14-GNAS2 complex, consisting of TAS2R14, GNAS2, GNB1 and GNG2; within the complex interacts with GNAS2.

Its subcellular location is the membrane. It catalyses the reaction Ca(2+)(in) = Ca(2+)(out). The enzyme catalyses 3',5'-cyclic AMP(in) = 3',5'-cyclic AMP(out). Basal activity is enhanced by binding to bitter tastants, such as flufenamic acid and aristolochic acid. Regulated by cholesterol in a concentration-dependent manner. Gustducin-linked G-protein coupled receptor that plays a role in the perception of bitterness. The activity of this receptor stimulates GNAT3, activating the gustducin G-protein pathway. Likely plays a role in sensing the chemical composition of the gastrointestinal content and other extra-oral tissues via the inhibitory G-protein pathways. This is Taste receptor type 2 member 14 (TAS2R14) from Pan troglodytes (Chimpanzee).